The primary structure comprises 136 residues: Probable 5-hydroxyisourate hydrolase ZK697.8 (136 aa).

The N-terminal stretch at 1 to 19 (MIKFLLFLAIAAATVISNA) is a signal peptide. 3 residues coordinate substrate: His-31, Arg-69, and Tyr-133.

Belongs to the transthyretin family. 5-hydroxyisourate hydrolase subfamily. In terms of assembly, homotetramer.

The catalysed reaction is 5-hydroxyisourate + H2O = 5-hydroxy-2-oxo-4-ureido-2,5-dihydro-1H-imidazole-5-carboxylate + H(+). In terms of biological role, catalyzes the hydrolysis of 5-hydroxyisourate (HIU) to 2-oxo-4-hydroxy-4-carboxy-5-ureidoimidazoline (OHCU). This chain is Probable 5-hydroxyisourate hydrolase ZK697.8, found in Caenorhabditis elegans.